A 203-amino-acid chain; its full sequence is Glycerol-3-phosphate acyltransferase (203 aa).

Transmembrane regions (helical) follow at residues 3–23 (LASA…AILV), 75–95 (LGLE…GHLF), 113–133 (VILG…LIVA), and 156–176 (LLTG…LIYW).

This sequence belongs to the PlsY family. In terms of assembly, probably interacts with PlsX.

The protein localises to the cell inner membrane. The enzyme catalyses an acyl phosphate + sn-glycerol 3-phosphate = a 1-acyl-sn-glycero-3-phosphate + phosphate. The protein operates within lipid metabolism; phospholipid metabolism. Its function is as follows. Catalyzes the transfer of an acyl group from acyl-phosphate (acyl-PO(4)) to glycerol-3-phosphate (G3P) to form lysophosphatidic acid (LPA). This enzyme utilizes acyl-phosphate as fatty acyl donor, but not acyl-CoA or acyl-ACP. The polypeptide is Glycerol-3-phosphate acyltransferase (Thioalkalivibrio sulfidiphilus (strain HL-EbGR7)).